An 838-amino-acid chain; its full sequence is Sec1 family domain-containing protein MIP3 (838 aa).

Residues 637–677 (KSEETKEIPSDDQLDIDALDDDPWGKWGDEEEEEVDNSKAD) are disordered. Positions 646-658 (SDDQLDIDALDDD) are enriched in acidic residues.

This sequence belongs to the STXBP/unc-18/SEC1 family. As to quaternary structure, forms a complex with MAG2, ZW10/MIP1 and MIP2 on the endoplasmic reticulum.

The protein resides in the endoplasmic reticulum membrane. Its function is as follows. Required for proper maturation of seed storage proteins. Forms a complex with MAG2, ZW10/MIP1 and MIP2 on the endoplasmic reticulum that may be responsible for efficient transport of seed storage proteins. This is Sec1 family domain-containing protein MIP3 from Arabidopsis thaliana (Mouse-ear cress).